The chain runs to 438 residues: Serine hydroxymethyltransferase 1 (438 aa).

(6S)-5,6,7,8-tetrahydrofolate-binding positions include Leu130 and 134-136; that span reads GHL. The residue at position 239 (Lys239) is an N6-(pyridoxal phosphate)lysine.

The protein belongs to the SHMT family. Homodimer. The cofactor is pyridoxal 5'-phosphate.

Its subcellular location is the cytoplasm. It carries out the reaction (6R)-5,10-methylene-5,6,7,8-tetrahydrofolate + glycine + H2O = (6S)-5,6,7,8-tetrahydrofolate + L-serine. It participates in one-carbon metabolism; tetrahydrofolate interconversion. Its pathway is amino-acid biosynthesis; glycine biosynthesis; glycine from L-serine: step 1/1. Its function is as follows. Catalyzes the reversible interconversion of serine and glycine with tetrahydrofolate (THF) serving as the one-carbon carrier. This reaction serves as the major source of one-carbon groups required for the biosynthesis of purines, thymidylate, methionine, and other important biomolecules. Also exhibits THF-independent aldolase activity toward beta-hydroxyamino acids, producing glycine and aldehydes, via a retro-aldol mechanism. This Mycobacterium tuberculosis (strain CDC 1551 / Oshkosh) protein is Serine hydroxymethyltransferase 1.